Reading from the N-terminus, the 914-residue chain is Alanine--tRNA ligase (914 aa).

Positions 613, 617, 717, and 721 each coordinate Zn(2+).

This sequence belongs to the class-II aminoacyl-tRNA synthetase family. Zn(2+) is required as a cofactor.

It is found in the cytoplasm. The catalysed reaction is tRNA(Ala) + L-alanine + ATP = L-alanyl-tRNA(Ala) + AMP + diphosphate. Functionally, catalyzes the attachment of alanine to tRNA(Ala) in a two-step reaction: alanine is first activated by ATP to form Ala-AMP and then transferred to the acceptor end of tRNA(Ala). Also edits incorrectly charged Ser-tRNA(Ala) and Gly-tRNA(Ala) via its editing domain. The polypeptide is Alanine--tRNA ligase (Pyrococcus furiosus (strain ATCC 43587 / DSM 3638 / JCM 8422 / Vc1)).